The sequence spans 165 residues: Phosphopantetheine adenylyltransferase (165 aa).

Thr-10 is a substrate binding site. Residues 10–11 (TF) and His-18 contribute to the ATP site. The substrate site is built by Lys-42, Leu-75, and Arg-89. Residues 90–92 (GVR), Glu-100, and 125–131 (VSFISSS) contribute to the ATP site.

The protein belongs to the bacterial CoaD family. Homohexamer. Requires Mg(2+) as cofactor.

It localises to the cytoplasm. The catalysed reaction is (R)-4'-phosphopantetheine + ATP + H(+) = 3'-dephospho-CoA + diphosphate. It functions in the pathway cofactor biosynthesis; coenzyme A biosynthesis; CoA from (R)-pantothenate: step 4/5. In terms of biological role, reversibly transfers an adenylyl group from ATP to 4'-phosphopantetheine, yielding dephospho-CoA (dPCoA) and pyrophosphate. This chain is Phosphopantetheine adenylyltransferase, found in Buchnera aphidicola subsp. Schizaphis graminum (strain Sg).